Consider the following 242-residue polypeptide: Probable transcriptional regulatory protein Bcen2424_2294 (242 aa).

It belongs to the TACO1 family.

It is found in the cytoplasm. This chain is Probable transcriptional regulatory protein Bcen2424_2294, found in Burkholderia cenocepacia (strain HI2424).